A 189-amino-acid polypeptide reads, in one-letter code: Inner membrane-spanning protein YciB (189 aa).

5 helical membrane-spanning segments follow: residues 23 to 43 (ILLATLVLIPATLAQVAFVWW), 54 to 74 (ITLALVVVMGGATVIFHDAAF), 82 to 102 (VNWLFAFAFLVAPLFGGKTLI), 120 to 140 (LNLAWVAFFIALGAINVYVFK), and 150 to 170 (FKLFGMLGLTLLFVLGQGVYL).

This sequence belongs to the YciB family.

Its subcellular location is the cell inner membrane. In terms of biological role, plays a role in cell envelope biogenesis, maintenance of cell envelope integrity and membrane homeostasis. The polypeptide is Inner membrane-spanning protein YciB (Chromohalobacter salexigens (strain ATCC BAA-138 / DSM 3043 / CIP 106854 / NCIMB 13768 / 1H11)).